Consider the following 216-residue polypeptide: Large ribosomal subunit protein uL3 (216 aa).

The interval 134–153 (RATHGNSRSHNVPGSIGMAQ) is disordered. Gln-153 carries the N5-methylglutamine modification.

It belongs to the universal ribosomal protein uL3 family. As to quaternary structure, part of the 50S ribosomal subunit. Forms a cluster with proteins L14 and L19. In terms of processing, methylated by PrmB.

One of the primary rRNA binding proteins, it binds directly near the 3'-end of the 23S rRNA, where it nucleates assembly of the 50S subunit. The sequence is that of Large ribosomal subunit protein uL3 from Cupriavidus taiwanensis (strain DSM 17343 / BCRC 17206 / CCUG 44338 / CIP 107171 / LMG 19424 / R1) (Ralstonia taiwanensis (strain LMG 19424)).